Here is a 382-residue protein sequence, read N- to C-terminus: 8-amino-7-oxononanoate synthase (382 aa).

Positions 22 and 29 each coordinate substrate. Residue 109–110 (GF) participates in pyridoxal 5'-phosphate binding. His-134 serves as a coordination point for substrate. Pyridoxal 5'-phosphate is bound by residues Ser-182, 207 to 210 (DDAH), and 233 to 236 (TLSK). Lys-236 is modified (N6-(pyridoxal phosphate)lysine). Thr-345 contributes to the substrate binding site.

Belongs to the class-II pyridoxal-phosphate-dependent aminotransferase family. BioF subfamily. Homodimer. Requires pyridoxal 5'-phosphate as cofactor.

It carries out the reaction 6-carboxyhexanoyl-[ACP] + L-alanine + H(+) = (8S)-8-amino-7-oxononanoate + holo-[ACP] + CO2. Its pathway is cofactor biosynthesis; biotin biosynthesis. Its function is as follows. Catalyzes the decarboxylative condensation of pimeloyl-[acyl-carrier protein] and L-alanine to produce 8-amino-7-oxononanoate (AON), [acyl-carrier protein], and carbon dioxide. This chain is 8-amino-7-oxononanoate synthase, found in Granulibacter bethesdensis (strain ATCC BAA-1260 / CGDNIH1).